Consider the following 80-residue polypeptide: Turripeptide VI/VII-01 (80 aa).

The N-terminal stretch at 1-22 is a signal peptide; it reads MRLQLILTITLLLTSFMGYRDA. Residues 23 to 36 constitute a propeptide that is removed on maturation; that stretch reads AVIQGKTERSAMKM. 3 disulfides stabilise this stretch: cysteine 48-cysteine 61, cysteine 50-cysteine 65, and cysteine 60-cysteine 70. Positions 77–80 are excised as a propeptide; it reads SSAI.

In terms of tissue distribution, expressed by the venom duct.

Its subcellular location is the secreted. The protein is Turripeptide VI/VII-01 of Gemmula speciosa (Splendid gem-turris).